The primary structure comprises 204 residues: Large ribosomal subunit protein uL22c (204 aa).

This sequence belongs to the universal ribosomal protein uL22 family. As to quaternary structure, part of the 50S ribosomal subunit.

The protein localises to the plastid. Its subcellular location is the chloroplast. Its function is as follows. This protein binds specifically to 23S rRNA. Functionally, the globular domain of the protein is located near the polypeptide exit tunnel on the outside of the subunit, while an extended beta-hairpin is found that lines the wall of the exit tunnel in the center of the 70S ribosome. In Pisum sativum (Garden pea), this protein is Large ribosomal subunit protein uL22c (rpl22).